The sequence spans 440 residues: 6-phospho-alpha-glucosidase (440 aa).

4-70 (FSVVIAGGGS…PEIEFSYTTD (67 aa)) contacts NAD(+). Substrate-binding residues include R93 and N147. C169 lines the Mn(2+) pocket. D170 (proton donor) is an active-site residue. H200 serves as a coordination point for Mn(2+). Y263 functions as the Proton acceptor in the catalytic mechanism. Position 283 (R283) interacts with substrate.

Homodimer. It depends on NAD(+) as a cofactor. Mn(2+) is required as a cofactor. Requires Co(2+) as cofactor. Ni(2+) serves as cofactor.

It catalyses the reaction alpha-maltose 6'-phosphate + H2O = D-glucose 6-phosphate + D-glucose. The protein operates within glycan biosynthesis; sucrose metabolism. Functionally, is involved in the catabolism of alpha-glycosides accumulated via a phosphoenolpyruvate-dependent phosphotransferase system (PEP-PTS). Hydrolyzes a wide variety of 6-phospho-alpha-D-glucosides including maltose-6'-phosphate, isomaltose-6'-phosphate, maltitol-6-phosphate, trehalose-6-phosphate and the 6'-phosphorylated derivatives of the five linkage-isomeric alpha-D-glucosyl-D-fructoses: trehalulose-6'-phosphate, turanose-6'-phosphate, maltulose-6'-phosphate, leucrose-6'-phosphate, and palatinose-6'-phosphate. However, sucrose-6-phosphate is not a substrate for this enzyme. This Klebsiella pneumoniae protein is 6-phospho-alpha-glucosidase.